The following is a 237-amino-acid chain: Ubiquinone biosynthesis O-methyltransferase (237 aa).

S-adenosyl-L-methionine contacts are provided by Arg38, Gly58, Asp79, and Met124.

This sequence belongs to the methyltransferase superfamily. UbiG/COQ3 family.

It catalyses the reaction a 3-demethylubiquinol + S-adenosyl-L-methionine = a ubiquinol + S-adenosyl-L-homocysteine + H(+). The enzyme catalyses a 3-(all-trans-polyprenyl)benzene-1,2-diol + S-adenosyl-L-methionine = a 2-methoxy-6-(all-trans-polyprenyl)phenol + S-adenosyl-L-homocysteine + H(+). It functions in the pathway cofactor biosynthesis; ubiquinone biosynthesis. Its function is as follows. O-methyltransferase that catalyzes the 2 O-methylation steps in the ubiquinone biosynthetic pathway. The protein is Ubiquinone biosynthesis O-methyltransferase of Acinetobacter baumannii (strain ACICU).